A 219-amino-acid polypeptide reads, in one-letter code: Holliday junction branch migration complex subunit RuvA (219 aa).

A domain I region spans residues 1–67 (MIGWLRGERI…DDGSSLFGFP (67 aa)). Residues 68-146 (DRRERDLFRV…AWSAEKNSDH (79 aa)) are domain II. The tract at residues 147–161 (SDLSLVDRSDLKSLP) is flexible linker. The interval 162 to 219 (IEPDPLQDLQLTLSTLGYEDLEIRRAMRAVATGEEVPAANDGDGWLRASLRWLNRPSA) is domain III.

This sequence belongs to the RuvA family. Homotetramer. Forms an RuvA(8)-RuvB(12)-Holliday junction (HJ) complex. HJ DNA is sandwiched between 2 RuvA tetramers; dsDNA enters through RuvA and exits via RuvB. An RuvB hexamer assembles on each DNA strand where it exits the tetramer. Each RuvB hexamer is contacted by two RuvA subunits (via domain III) on 2 adjacent RuvB subunits; this complex drives branch migration. In the full resolvosome a probable DNA-RuvA(4)-RuvB(12)-RuvC(2) complex forms which resolves the HJ.

The protein resides in the cytoplasm. The RuvA-RuvB-RuvC complex processes Holliday junction (HJ) DNA during genetic recombination and DNA repair, while the RuvA-RuvB complex plays an important role in the rescue of blocked DNA replication forks via replication fork reversal (RFR). RuvA specifically binds to HJ cruciform DNA, conferring on it an open structure. The RuvB hexamer acts as an ATP-dependent pump, pulling dsDNA into and through the RuvAB complex. HJ branch migration allows RuvC to scan DNA until it finds its consensus sequence, where it cleaves and resolves the cruciform DNA. This Synechococcus sp. (strain CC9311) protein is Holliday junction branch migration complex subunit RuvA.